Here is a 194-residue protein sequence, read N- to C-terminus: FMN-dependent NADH:quinone oxidoreductase (194 aa).

FMN is bound by residues Ser-10 and 90–93; that span reads MYNL.

Belongs to the azoreductase type 1 family. Homodimer. FMN serves as cofactor.

It catalyses the reaction 2 a quinone + NADH + H(+) = 2 a 1,4-benzosemiquinone + NAD(+). The catalysed reaction is N,N-dimethyl-1,4-phenylenediamine + anthranilate + 2 NAD(+) = 2-(4-dimethylaminophenyl)diazenylbenzoate + 2 NADH + 2 H(+). Its function is as follows. Quinone reductase that provides resistance to thiol-specific stress caused by electrophilic quinones. In terms of biological role, also exhibits azoreductase activity. Catalyzes the reductive cleavage of the azo bond in aromatic azo compounds to the corresponding amines. In Haemophilus influenzae (strain 86-028NP), this protein is FMN-dependent NADH:quinone oxidoreductase.